The following is a 317-amino-acid chain: NADH-quinone oxidoreductase subunit H 1 (317 aa).

A run of 8 helical transmembrane segments spans residues 7–27 (IWVN…MLSW), 74–94 (AVFV…FAVV), 107–127 (IGVL…VLGG), 147–167 (LSYE…AGSF), 179–199 (LWFC…GIAE), 230–250 (FFIG…TLFF), 257–277 (VLPP…CFVL), and 297–317 (VMLP…LSVA).

It belongs to the complex I subunit 1 family. NDH-1 is composed of 14 different subunits. Subunits NuoA, H, J, K, L, M, N constitute the membrane sector of the complex.

It is found in the cell inner membrane. It catalyses the reaction a quinone + NADH + 5 H(+)(in) = a quinol + NAD(+) + 4 H(+)(out). In terms of biological role, NDH-1 shuttles electrons from NADH, via FMN and iron-sulfur (Fe-S) centers, to quinones in the respiratory chain. The immediate electron acceptor for the enzyme in this species is believed to be ubiquinone. Couples the redox reaction to proton translocation (for every two electrons transferred, four hydrogen ions are translocated across the cytoplasmic membrane), and thus conserves the redox energy in a proton gradient. This subunit may bind ubiquinone. The sequence is that of NADH-quinone oxidoreductase subunit H 1 from Nitrosospira multiformis (strain ATCC 25196 / NCIMB 11849 / C 71).